A 266-amino-acid polypeptide reads, in one-letter code: Apolipoprotein A-I (266 aa).

The first 18 residues, 1 to 18 (MKAALLTLAVLFLTGSQA), serve as a signal peptide directing secretion. Repeat copies occupy residues 67–88 (LKLL…EQIG) and 89–110 (PVTQ…QEMS). Positions 67–266 (LKLLDNWDSL…DEATKKLNAQ (200 aa)) are 10 X approximate tandem repeats. A Methionine sulfoxide modification is found at Met-109. One copy of the 3; half-length repeat lies at 111–121 (KDLEEVKQKVQ). Repeat copies occupy residues 122-143 (PYLD…QKVA), 144-165 (PLGS…EKLS), 166-187 (PLAE…AQLA), 188-209 (PYSD…EGGG), and 210-231 (ASLA…EKAR). Residues 232–242 (PALEDLRQGLL) form a 9; half-length repeat. The stretch at 243–266 (PVLESFKVSLLAAIDEATKKLNAQ) is repeat 10.

This sequence belongs to the apolipoprotein A1/A4/E family. Homodimer. Interacts with APOA1BP and CLU. Component of a sperm activating protein complex (SPAP), consisting of APOA1, an immunoglobulin heavy chain, an immunoglobulin light chain and albumin. Interacts with NDRG1. Interacts with SCGB3A2. Interacts with NAXE and YJEFN3. Post-translationally, palmitoylated. Glycosylated. In terms of processing, phosphorylation sites are present in the extracellular medium. Major protein of plasma HDL, also found in chylomicrons. Synthesized in the liver and small intestine.

It is found in the secreted. Functionally, participates in the reverse transport of cholesterol from tissues to the liver for excretion by promoting cholesterol efflux from tissues and by acting as a cofactor for the lecithin cholesterol acyltransferase (LCAT). As part of the SPAP complex, activates spermatozoa motility. This Canis lupus familiaris (Dog) protein is Apolipoprotein A-I (APOA1).